The sequence spans 432 residues: Glutamyl-tRNA reductase (432 aa).

Substrate contacts are provided by residues 55–58 (TCNR), Ser-113, 118–120 (EAQ), and Gln-124. Residue Cys-56 is the Nucleophile of the active site. 193 to 198 (GAGEMI) is a binding site for NADP(+).

This sequence belongs to the glutamyl-tRNA reductase family. As to quaternary structure, homodimer.

The catalysed reaction is (S)-4-amino-5-oxopentanoate + tRNA(Glu) + NADP(+) = L-glutamyl-tRNA(Glu) + NADPH + H(+). The protein operates within porphyrin-containing compound metabolism; protoporphyrin-IX biosynthesis; 5-aminolevulinate from L-glutamyl-tRNA(Glu): step 1/2. Functionally, catalyzes the NADPH-dependent reduction of glutamyl-tRNA(Glu) to glutamate 1-semialdehyde (GSA). The sequence is that of Glutamyl-tRNA reductase from Paracidovorax citrulli (strain AAC00-1) (Acidovorax citrulli).